The following is a 273-amino-acid chain: Putative phosphoenolpyruvate synthase regulatory protein (273 aa).

Position 153–160 (153–160 (AVSRAGKT)) interacts with ADP.

This sequence belongs to the pyruvate, phosphate/water dikinase regulatory protein family. PSRP subfamily.

It catalyses the reaction [pyruvate, water dikinase] + ADP = [pyruvate, water dikinase]-phosphate + AMP + H(+). It carries out the reaction [pyruvate, water dikinase]-phosphate + phosphate + H(+) = [pyruvate, water dikinase] + diphosphate. Bifunctional serine/threonine kinase and phosphorylase involved in the regulation of the phosphoenolpyruvate synthase (PEPS) by catalyzing its phosphorylation/dephosphorylation. In Xanthomonas axonopodis pv. citri (strain 306), this protein is Putative phosphoenolpyruvate synthase regulatory protein.